We begin with the raw amino-acid sequence, 261 residues long: RNA-binding protein 1 (261 aa).

Disordered regions lie at residues 1-38 and 232-261; these read MADG…SGNE and QFSR…RGRR. Residues 151 to 236 form the RRM domain; the sequence is PTLYIEGLPS…SHLRLQFSRY (86 aa). Over residues 240–254 the composition is skewed to gly residues; it reads RSGGGPRSSGPPRGG.

Ubiquitous.

Its subcellular location is the nucleus speckle. It is found in the cytoplasmic granule. Its function is as follows. RNA-binding protein interacting with the enod40 RNA. In Medicago truncatula (Barrel medic), this protein is RNA-binding protein 1.